The chain runs to 360 residues: Protein phosphatase 1 regulatory subunit 7 (360 aa).

Positions 1-63 are disordered; that stretch reads MAAERGAGQQ…RGAEDPEEEH (63 aa). N-acetylalanine is present on Ala2. 5 positions are modified to phosphoserine: Ser12, Ser24, Ser27, Ser44, and Ser47. Over residues 17 to 34 the composition is skewed to basic and acidic residues; that stretch reads EVDRRVESEESGDEEGKK. LRR repeat units lie at residues 77 to 98, 99 to 120, 121 to 142, 143 to 164, 165 to 186, 187 to 208, 209 to 230, 231 to 252, 253 to 274, 275 to 296, and 297 to 318; these read DAED…EVLK, KVKS…DELQ, SLRE…EALT, ELEV…DKLT, QLKK…STLQ, QLQM…DTLT, NLES…DALS, NLTV…QNLV, NLRE…ENNN, KLTM…SHLT, and ELQE…DELK. Ser322 is subject to Phosphoserine. One can recognise an LRRCT domain in the interval 331 to 360; sequence NPLQKDPQYRRKVMLALPSVRQIDATFVRF.

It belongs to the SDS22 family. In terms of assembly, interacts with PPP1CA, PPP1CB and PPP1CC/PPP1G.

The protein resides in the nucleus. Its function is as follows. Regulatory subunit of protein phosphatase 1. The chain is Protein phosphatase 1 regulatory subunit 7 (Ppp1r7) from Rattus norvegicus (Rat).